Here is a 269-residue protein sequence, read N- to C-terminus: UPF0329 protein ECU04_1660 (269 aa).

Basic and acidic residues predominate over residues 1 to 12 (MEERERGKEKGS). Positions 1–74 (MEERERGKEK…SPKEKSKGEE (74 aa)) are disordered. Residues 13-23 (KGKGRKKRGKK) are compositionally biased toward basic residues. Residues 24 to 36 (GAGEAKEESKEED) show a composition bias toward basic and acidic residues. Over residues 37–51 (RGEEEEESVEADVPV) the composition is skewed to acidic residues.

It belongs to the UPF0329 family.

The chain is UPF0329 protein ECU04_1660 from Encephalitozoon cuniculi (strain GB-M1) (Microsporidian parasite).